The following is a 743-amino-acid chain: DEAD-box ATP-dependent RNA helicase 3B, chloroplastic (743 aa).

A chloroplast-targeting transit peptide spans 1–37; that stretch reads MASLTLPALALALSNPGAVRLRAAAFRCWALRRRGWA. Residues 60-79 are disordered; sequence GSDDEDGEGPYGSDADEGFE. Acidic residues predominate over residues 61–79; the sequence is SDDEDGEGPYGSDADEGFE. The Q motif signature appears at 88–116; it reads LAIARLGLPDELVATLEKRGITHLFPIQR. A Helicase ATP-binding domain is found at 119-295; sequence LIPALEGRDL…RRYLNNPLTI (177 aa). 132-139 contributes to the ATP binding site; sequence AKTGTGKT. A DEAD box motif is present at residues 243–246; it reads DEAD. Residues 324 to 469 enclose the Helicase C-terminal domain; sequence VLSDLITVYA…ISPPSIEEVL (146 aa). The disordered stretch occupies residues 606 to 719; the sequence is LTKISKLPAL…RSSSFGGRES (114 aa). Residues 642–653 show a composition bias toward gly residues; the sequence is GGGASRGRGGWD. The segment covering 657-671 has biased composition (basic and acidic residues); sequence EDRFRRGGRSLRSDN. The span at 688–719 shows a compositional bias: low complexity; that stretch reads RSSSFGSRSSSYSSRGSPSFGGRSSSFGGRES. The segment at 725 to 742 adopts a CCHC-type zinc-finger fold; it reads GACFNCGESGHRATDCPN.

This sequence belongs to the DEAD box helicase family. DDX21/DDX50 subfamily.

Its subcellular location is the plastid. The protein localises to the chloroplast stroma. The catalysed reaction is ATP + H2O = ADP + phosphate + H(+). In terms of biological role, nuclear genome-encoded factor involved in ribosome biogenesis in chloroplasts. Binds specific group II introns in chloroplasts and facilitates their splicing. Is required for rRNA maturation in plastids and may contribute to the assembly of the large (50S) ribosomal subunit. Required for normal development of chloroplasts. This is DEAD-box ATP-dependent RNA helicase 3B, chloroplastic from Zea mays (Maize).